The following is a 509-amino-acid chain: Maturase K (509 aa).

This sequence belongs to the intron maturase 2 family. MatK subfamily.

The protein resides in the plastid. It is found in the chloroplast. Functionally, usually encoded in the trnK tRNA gene intron. Probably assists in splicing its own and other chloroplast group II introns. This is Maturase K from Banksia cuneata (Quairading banksia).